A 137-amino-acid chain; its full sequence is Small ribosomal subunit protein uS12 (137 aa).

Residue Asp89 is modified to 3-methylthioaspartic acid. The segment at 104 to 137 (TAGVNGRKQSRSKYGAKRPKPGQAAAAPAKGKKK) is disordered. Positions 111-123 (KQSRSKYGAKRPK) are enriched in basic residues. The segment covering 124–137 (PGQAAAAPAKGKKK) has biased composition (low complexity).

This sequence belongs to the universal ribosomal protein uS12 family. In terms of assembly, part of the 30S ribosomal subunit. Contacts proteins S8 and S17. May interact with IF1 in the 30S initiation complex.

Its function is as follows. With S4 and S5 plays an important role in translational accuracy. In terms of biological role, interacts with and stabilizes bases of the 16S rRNA that are involved in tRNA selection in the A site and with the mRNA backbone. Located at the interface of the 30S and 50S subunits, it traverses the body of the 30S subunit contacting proteins on the other side and probably holding the rRNA structure together. The combined cluster of proteins S8, S12 and S17 appears to hold together the shoulder and platform of the 30S subunit. This chain is Small ribosomal subunit protein uS12, found in Cytophaga hutchinsonii (strain ATCC 33406 / DSM 1761 / CIP 103989 / NBRC 15051 / NCIMB 9469 / D465).